A 168-amino-acid polypeptide reads, in one-letter code: MPSLSITRQGWIAYAIAAVTVVLDQISKLWILGLLGREPGASLPLLGPIHLTMVHNYGMSFGLLRDSDWGRWLLIGFSILVVIGLAVWVHKATRPLLAVGIGLIIGGAIGNNLIDRVIYGYVVDFIDVSRLYFPWVFNIADSGISVGVALLLLDSFLSEENKLSHQTE.

Transmembrane regions (helical) follow at residues 15-35 (AIAA…LGLL), 69-89 (WGRW…AVWV), and 95-115 (PLLA…NLID). Active-site residues include aspartate 124 and aspartate 141. Residues 133 to 153 (FPWVFNIADSGISVGVALLLL) form a helical membrane-spanning segment.

Belongs to the peptidase A8 family.

Its subcellular location is the cell inner membrane. It catalyses the reaction Release of signal peptides from bacterial membrane prolipoproteins. Hydrolyzes -Xaa-Yaa-Zaa-|-(S,diacylglyceryl)Cys-, in which Xaa is hydrophobic (preferably Leu), and Yaa (Ala or Ser) and Zaa (Gly or Ala) have small, neutral side chains.. The protein operates within protein modification; lipoprotein biosynthesis (signal peptide cleavage). In terms of biological role, this protein specifically catalyzes the removal of signal peptides from prolipoproteins. The sequence is that of Lipoprotein signal peptidase from Caulobacter vibrioides (strain ATCC 19089 / CIP 103742 / CB 15) (Caulobacter crescentus).